The chain runs to 848 residues: Translation initiation factor IF-2 (848 aa).

Residues 1–10 (MSENNNDKIT) show a composition bias toward basic and acidic residues. Disordered regions lie at residues 1 to 79 (MSEN…EKPV) and 121 to 163 (AERQ…LFSS). Residues 17 to 33 (LKRSGSETNTVKQNFNH) show a composition bias toward polar residues. Residues 121–138 (AERQAAEKQAKESEEGLH) are compositionally biased toward basic and acidic residues. Residues 149–163 (KSSSNTTKPTPLFSS) are compositionally biased toward polar residues. The 168-residue stretch at 346–513 (TRPPIVTIMG…AILLQAEILD (168 aa)) folds into the tr-type G domain. The tract at residues 355–362 (GHVDHGKT) is G1. Position 355-362 (355-362 (GHVDHGKT)) interacts with GTP. The interval 380 to 384 (GITQH) is G2. The segment at 401 to 404 (DTPG) is G3. GTP-binding positions include 401-405 (DTPGH) and 455-458 (NKID). The G4 stretch occupies residues 455–458 (NKID). Residues 491–493 (SAK) are G5.

The protein belongs to the TRAFAC class translation factor GTPase superfamily. Classic translation factor GTPase family. IF-2 subfamily.

It localises to the cytoplasm. Functionally, one of the essential components for the initiation of protein synthesis. Protects formylmethionyl-tRNA from spontaneous hydrolysis and promotes its binding to the 30S ribosomal subunits. Also involved in the hydrolysis of GTP during the formation of the 70S ribosomal complex. The polypeptide is Translation initiation factor IF-2 (Bartonella bacilliformis (strain ATCC 35685 / KC583 / Herrer 020/F12,63)).